Reading from the N-terminus, the 154-residue chain is 6,7-dimethyl-8-ribityllumazine synthase (154 aa).

5-amino-6-(D-ribitylamino)uracil-binding positions include Phe23, 57 to 59 (AFE), and 81 to 83 (AVI). 86–87 (AT) serves as a coordination point for (2S)-2-hydroxy-3-oxobutyl phosphate. His89 functions as the Proton donor in the catalytic mechanism. A 5-amino-6-(D-ribitylamino)uracil-binding site is contributed by Phe114. Arg128 lines the (2S)-2-hydroxy-3-oxobutyl phosphate pocket.

This sequence belongs to the DMRL synthase family.

It carries out the reaction (2S)-2-hydroxy-3-oxobutyl phosphate + 5-amino-6-(D-ribitylamino)uracil = 6,7-dimethyl-8-(1-D-ribityl)lumazine + phosphate + 2 H2O + H(+). It functions in the pathway cofactor biosynthesis; riboflavin biosynthesis; riboflavin from 2-hydroxy-3-oxobutyl phosphate and 5-amino-6-(D-ribitylamino)uracil: step 1/2. Its function is as follows. Catalyzes the formation of 6,7-dimethyl-8-ribityllumazine by condensation of 5-amino-6-(D-ribitylamino)uracil with 3,4-dihydroxy-2-butanone 4-phosphate. This is the penultimate step in the biosynthesis of riboflavin. This is 6,7-dimethyl-8-ribityllumazine synthase from Syntrophus aciditrophicus (strain SB).